A 264-amino-acid polypeptide reads, in one-letter code: H-2 class II histocompatibility antigen, E-D beta chain (264 aa).

An N-terminal signal peptide occupies residues 1-31; that stretch reads MVWLPRVPCVAAVILLLTVLSPPVALVRDTR. Positions 32-121 are beta-1; sequence PRFLEYVTSE…ISDKFLVRRR (90 aa). At 32 to 225 the chain is on the extracellular side; that stretch reads PRFLEYVTSE…KAQSTSAQNK (194 aa). 2 disulfides stabilise this stretch: Cys42-Cys106 and Cys144-Cys200. A glycan (N-linked (GlcNAc...) asparagine) is linked at Asn46. The tract at residues 122–215 is beta-2; sequence VEPTVTVYPT…SLTDPVTVEW (94 aa). Residues 124-214 form the Ig-like C1-type domain; the sequence is PTVTVYPTKT…PSLTDPVTVE (91 aa). The connecting peptide stretch occupies residues 216–225; sequence KAQSTSAQNK. The chain crosses the membrane as a helical span at residues 226–248; that stretch reads MLSGVGGFVLGLLFLGAGLFIYF. Residues 249-264 are Cytoplasmic-facing; it reads RNQKGQSGLQPTGLLS.

The protein belongs to the MHC class II family.

The protein resides in the membrane. In Mus musculus (Mouse), this protein is H-2 class II histocompatibility antigen, E-D beta chain.